Here is a 592-residue protein sequence, read N- to C-terminus: MSDITEKTAEQLENLQINDDQQPAQSASAPSTSASESEASSVSKVENNNASLYVGELDPNITEALLYDVFSPLGPISSIRVCRDAVTKASLGYAYVNYTDYEAGKKAIQELNYAEINGRPCRIMWSERDPAIRKKGSGNIFIKNLHPAIDNKALHETFSTFGEVLSCKVALDENGNSRGFGFVHFKEESDAKDAIEAVNGMLMNGLEVYVAMHVPKKDRISKLEEAKANFTNIYVKNIDVETTDEEFEQLFSQYGEIVSAALEKDAEGKPKGFGFVNFVDHNAAAKAVEELNGKEFKSQALYVGRAQKKYERAEELKKQYEQYRLEKLAKFQGVNLFIKNLDDSIDDEKLKEEFAPYGTITSARVMRDQEGNSKGFGFVCFSSPEEATKAMTEKNQQIVAGKPLYVAIAQRKDVRRSQLAQQIQARNQIRFQQQQQQQAAAAAAGMPGQYMPQMFYGVMAPRGFPGPNPGMNGPMGAGIPKNGMVPPPQQFAGRPNGPMYQGMPPQNQFPRHQQQHYIQQQKQRQALGEQLYKKVSAKIDDENAAGKITGMILDLPPQQVIQLLDNDEQFEQQFQEALAAYENFKKEQEAQA.

The span at 1-10 (MSDITEKTAE) shows a compositional bias: basic and acidic residues. The tract at residues 1 to 43 (MSDITEKTAEQLENLQINDDQQPAQSASAPSTSASESEASSVS) is disordered. A compositionally biased stretch (polar residues) spans 11–20 (QLENLQINDD). Residues 21-43 (QQPAQSASAPSTSASESEASSVS) show a composition bias toward low complexity. 4 RRM domains span residues 50–128 (ASLY…WSER), 138–215 (GNIF…MHVP), 231–308 (TNIY…RAQK), and 334–411 (VNLF…IAQR). The PABC domain occupies 507 to 586 (NQFPRHQQQH…ALAAYENFKK (80 aa)).

It belongs to the polyadenylate-binding protein type-1 family.

The protein resides in the cytoplasm. It is found in the nucleus. Binds the poly(A) tail of mRNA. Appears to be an important mediator of the multiple roles of the poly(A) tail in mRNA biogenesis, stability and translation. In the nucleus, involved in both mRNA cleavage and polyadenylation. Is also required for efficient mRNA export to the cytoplasm. Acts in concert with a poly(A)-specific nuclease (PAN) to affect poly(A) tail shortening, which may occur concomitantly with either nucleocytoplasmic mRNA transport or translational initiation. In the cytoplasm, stimulates translation initiation and regulates mRNA decay through translation termination-coupled poly(A) shortening, probably mediated by PAN. This is Polyadenylate-binding protein, cytoplasmic and nuclear (PAB1) from Kluyveromyces lactis (strain ATCC 8585 / CBS 2359 / DSM 70799 / NBRC 1267 / NRRL Y-1140 / WM37) (Yeast).